A 352-amino-acid polypeptide reads, in one-letter code: uncharacterized protein (352 aa).

N-linked (GlcNAc...) asparagine glycans are attached at residues Asn14, Asn52, and Asn70. The tract at residues 41–73 is disordered; sequence LSDYKKNKDTLNNSNNNINQPFENSNNFNNNSK. Positions 50 to 72 are enriched in low complexity; sequence TLNNSNNNINQPFENSNNFNNNS. A helical membrane pass occupies residues 131–151; sequence IIFKSSGLLITLLVLYLGTFF. N-linked (GlcNAc...) asparagine glycosylation is found at Asn165, Asn186, Asn192, Asn193, Asn203, and Asn289. A compositionally biased stretch (low complexity) spans 193 to 213; that stretch reads NSSNSNNNNINNSNNNNNNNN. The interval 193 to 219 is disordered; sequence NSSNSNNNNINNSNNNNNNNNRILSPN.

The protein localises to the membrane. This is an uncharacterized protein from Dictyostelium discoideum (Social amoeba).